The primary structure comprises 142 residues: Protein NIM1-INTERACTING 1 (142 aa).

The involved in NPR1/NIM1 interaction stretch occupies residues 47 to 53 (DTFFKLI). Residues 60–64 (RKRRR) carry the Nuclear localization signal motif. 2 disordered regions span residues 63–86 (RREELAENSGVVRRKSNGGERSGI) and 108–142 (MFVSDHKEENTKVEQEEDQTEERNEDKALDLNLAL). Residues 110 to 141 (VSDHKEENTKVEQEEDQTEERNEDKALDLNLA) adopt a coiled-coil conformation. Basic and acidic residues predominate over residues 111–121 (SDHKEENTKVE).

It belongs to the NPR1-interactor family. Interacts with NPR1 C-terminal region.

It is found in the nucleus. This chain is Protein NIM1-INTERACTING 1, found in Arabidopsis thaliana (Mouse-ear cress).